Here is a 587-residue protein sequence, read N- to C-terminus: Protein NDNF (587 aa).

Residues 1–24 (MQRSTMLPGVELLLLFLLSTSLHA) form the signal peptide. Asn-109, Asn-129, Asn-190, Asn-321, Asn-334, Asn-459, Asn-498, and Asn-558 each carry an N-linked (GlcNAc...) asparagine glycan.

In terms of assembly, binds heparin. Interacts with dally; the interaction promotes dally degradation. Interacts with dpp and gbb.

The protein resides in the secreted. It is found in the extracellular space. The protein localises to the extracellular matrix. Secretory protein that acts as a feedback regulator of dpp/BMP, wg and hh signaling pathways. In the developing wing, is a dosage-dependent modulator of dpp/BMP signaling involved in wing growth and crossvein patterning; low levels promote and high levels inhibit dpp/BMP signaling. In the early pupal wing, inhibits dpp/BMP signaling activity to prevent the formation of ectopic crossveins in the posterior compartment. Binds to dpp and gbb to modulate their release and activity decreasing dpp/BMP signaling in the responding cells. During wing development regulates dpp/BMP coreceptor dally availability on the cell surface. Might have a role in testis development. The chain is Protein NDNF from Drosophila melanogaster (Fruit fly).